Here is a 403-residue protein sequence, read N- to C-terminus: MKVLVINSGSSSIKYQLIEMDGEKVLCKGIAERIGIEGSRLVHRVNDEKYVIERELPDHEEALKLILNTLVDEKLGVIKDLKEIDAVGHRVVHGGERFKESVLVDEEVLKAIEEVSPLAPLHNPANLMGIKAAMKLLPGVPNVVVFDTAFHQTIPQKAYLYAIPYEYYEKHRIRRYGFHGTSHRYVSKRAAEILGKKLEELKIITCHIGNGASVAAVKYGKCVDTSMGFTPLEGLVMGTRSGDLDPAIPFFIMEKEGISPQEMYDILNKKSGVYGLSKGFSSDMRDIEEAALKGDEWCKLILDIYHYRIAKYIGAYAAAMNGVDAIVFTAGVGENSPITREDVCSYLEFLGVKLDKQKNEETIRGKEGIISTLDSRVKVLVVPTNEELMIARDTKEIVEKIGR.

Residue asparagine 7 coordinates Mg(2+). ATP is bound at residue lysine 14. Position 90 (arginine 90) interacts with substrate. The active-site Proton donor/acceptor is aspartate 147. ATP-binding positions include 207–211 (HIGNG), 283–285 (DMR), and 331–335 (GVGEN). Glutamate 386 provides a ligand contact to Mg(2+).

It belongs to the acetokinase family. Homodimer. Requires Mg(2+) as cofactor. It depends on Mn(2+) as a cofactor.

It is found in the cytoplasm. It catalyses the reaction acetate + ATP = acetyl phosphate + ADP. It functions in the pathway metabolic intermediate biosynthesis; acetyl-CoA biosynthesis; acetyl-CoA from acetate: step 1/2. Its function is as follows. Catalyzes the formation of acetyl phosphate from acetate and ATP. Can also catalyze the reverse reaction. The polypeptide is Acetate kinase (Thermotoga petrophila (strain ATCC BAA-488 / DSM 13995 / JCM 10881 / RKU-1)).